The chain runs to 272 residues: ATP synthase subunit a (272 aa).

A run of 5 helical transmembrane segments spans residues 41–61, 102–122, 147–167, 212–232, and 243–263; these read TLNIDSMFFSVVLGLIFLALF, IAPLALTIFVWVFLMNLMDLV, DVNITLSMALGVFILILFYSI, LFGNMYAGELIFILIAGLLPW, and AIFHILIITLQAFIFMVLTIV.

This sequence belongs to the ATPase A chain family. F-type ATPases have 2 components, CF(1) - the catalytic core - and CF(0) - the membrane proton channel. CF(1) has five subunits: alpha(3), beta(3), gamma(1), delta(1), epsilon(1). CF(0) has three main subunits: a(1), b(2) and c(9-12). The alpha and beta chains form an alternating ring which encloses part of the gamma chain. CF(1) is attached to CF(0) by a central stalk formed by the gamma and epsilon chains, while a peripheral stalk is formed by the delta and b chains.

The protein resides in the cell inner membrane. Functionally, key component of the proton channel; it plays a direct role in the translocation of protons across the membrane. The sequence is that of ATP synthase subunit a from Edwardsiella ictaluri (strain 93-146).